A 195-amino-acid polypeptide reads, in one-letter code: Large ribosomal subunit protein bL27c (195 aa).

Residues 1–60 constitute a chloroplast transit peptide; that stretch reads MASMAFTLVGAFKGMSLSSPCHSSSSASFLRADRVSLSVGGGVGMGVPMTMPVRRLTIQM.

The protein belongs to the bacterial ribosomal protein bL27 family. As to quaternary structure, part of the 50S ribosomal subunit.

Its subcellular location is the plastid. It is found in the chloroplast. In Oryza sativa subsp. japonica (Rice), this protein is Large ribosomal subunit protein bL27c (RPL27).